The primary structure comprises 660 residues: CXXC-type zinc finger protein 1 (660 aa).

At methionine 1 the chain carries N-acetylmethionine. The span at 1-14 shows a compositional bias: acidic residues; it reads MEGDGSDLEPPDAG. A disordered region spans residues 1 to 20; the sequence is MEGDGSDLEPPDAGDDSKSE. Serine 6 and serine 19 each carry phosphoserine. The PHD-type zinc-finger motif lies at 28–76; the sequence is YCICRKPDINCFMIGCDNCNEWFHGDCIRITEKMAKAIREWYCRECREK. Residues 91 to 120 are compositionally biased toward basic and acidic residues; the sequence is ERDGSERAGSEPRDEGGGRKRPASDPELQR. The tract at residues 91–166 is disordered; the sequence is ERDGSERAGS…QQQQQQQQQI (76 aa). Residue serine 124 is modified to Phosphoserine. A CXXC-type zinc finger spans residues 164 to 213; that stretch reads QQIKRSARMCGECEACRRTEDCGHCDFCRDMKKFGGPNKIRQKCRLRQCQ. Zn(2+)-binding residues include cysteine 173, cysteine 176, cysteine 179, cysteine 185, cysteine 188, cysteine 191, cysteine 207, and cysteine 212. Disordered regions lie at residues 223-287 and 328-375; these read FPSS…SDED and AVKV…DPAS. Serine 228 is subject to Phosphoserine. Phosphothreonine is present on threonine 231. Residue lysine 254 forms a Glycyl lysine isopeptide (Lys-Gly) (interchain with G-Cter in SUMO2) linkage. Over residues 328 to 338 the composition is skewed to basic residues; sequence AVKVKHVKRRE. A compositionally biased stretch (basic and acidic residues) spans 339 to 349; sequence KKSEKKKEERY. Residues 350–362 show a composition bias toward basic residues; that stretch reads KRHRQKQKHKDKW. The span at 363–372 shows a compositional bias: basic and acidic residues; the sequence is KHPERADAKD. The stretch at 426-479 forms a coiled coil; that stretch reads AEEHGKKLLERIRREQQSARTRLQEMERRFHELEAIILRAKQQAVREDEENNEN.

In terms of assembly, component of the SET1 complex, at least composed of the catalytic subunit (SETD1A or SETD1B), WDR5, WDR82, RBBP5, ASH2L/ASH2, CXXC1/CFP1, HCFC1 and DPY30. Interacts with SETD1A. Interacts with ZNF335. Interacts with PRDM9; this interaction does not link PRDM9-activated recombination hotspot sites with DSB machinery and is not required for the hotspot recognition pathway. Interacts with histone H3K4me3. In terms of tissue distribution, expressed in seminiferous tubules and in both germ cells and Sertoli cells. Highly expressed in spermatogonia, weakly expressed in leptonema and zygonema, and then again high expression in pachynema and diplonema, decreasing to undetectable levels in spermatids.

The protein localises to the nucleus speckle. The protein resides in the nucleus. Transcriptional activator that exhibits a unique DNA binding specificity for CpG unmethylated motifs with a preference for CpGG. The protein is CXXC-type zinc finger protein 1 (Cxxc1) of Mus musculus (Mouse).